A 300-amino-acid chain; its full sequence is Probable endonuclease 4 (300 aa).

Zn(2+)-binding residues include His-69, His-110, Glu-145, Asp-179, His-182, His-214, Asp-227, His-229, and Glu-259.

Belongs to the AP endonuclease 2 family. Zn(2+) is required as a cofactor.

The catalysed reaction is Endonucleolytic cleavage to 5'-phosphooligonucleotide end-products.. In terms of biological role, endonuclease IV plays a role in DNA repair. It cleaves phosphodiester bonds at apurinic or apyrimidinic (AP) sites, generating a 3'-hydroxyl group and a 5'-terminal sugar phosphate. The sequence is that of Probable endonuclease 4 from Lachnoclostridium phytofermentans (strain ATCC 700394 / DSM 18823 / ISDg) (Clostridium phytofermentans).